We begin with the raw amino-acid sequence, 510 residues long: 2-isopropylmalate synthase (510 aa).

Positions 5–267 (LVIFDTTLRD…DTRIDTTQIV (263 aa)) constitute a Pyruvate carboxyltransferase domain. Residues Asp14, His202, His204, and Asn238 each contribute to the Mn(2+) site. Residues 392 to 510 (RLLSLVAHSE…SSLERTHPQV (119 aa)) form a regulatory domain region.

Belongs to the alpha-IPM synthase/homocitrate synthase family. LeuA type 1 subfamily. Homodimer. Mn(2+) is required as a cofactor.

The protein localises to the cytoplasm. The catalysed reaction is 3-methyl-2-oxobutanoate + acetyl-CoA + H2O = (2S)-2-isopropylmalate + CoA + H(+). The protein operates within amino-acid biosynthesis; L-leucine biosynthesis; L-leucine from 3-methyl-2-oxobutanoate: step 1/4. Catalyzes the condensation of the acetyl group of acetyl-CoA with 3-methyl-2-oxobutanoate (2-ketoisovalerate) to form 3-carboxy-3-hydroxy-4-methylpentanoate (2-isopropylmalate). The sequence is that of 2-isopropylmalate synthase from Nitrosomonas eutropha (strain DSM 101675 / C91 / Nm57).